Reading from the N-terminus, the 311-residue chain is CID domain-containing protein 1 (311 aa).

Residues 1–134 (MSDFTEQTLR…RLQEAHQQMK (134 aa)) enclose the CID domain. The stretch at 224–256 (MLEDYVKRLKEETKERESLETNLNMLIQNVRMS) forms a coiled coil.

The polypeptide is CID domain-containing protein 1 (cids-1) (Caenorhabditis briggsae).